The following is a 129-amino-acid chain: MLVKFVACFVFVAVASASDFSSFSYGVADPSTGDFKSQIESRLGDNVQGQYSLLESDGTQRTVDYAAGSEGFNAVVRKDPALIAAAPYITAPYGYAVPYAYTSPYGISNLANYRALKFASALPYSRVFF.

Positions 1-17 are cleaved as a signal peptide; the sequence is MLVKFVACFVFVAVASA. One can recognise a Chitin-binding type R&amp;R domain in the interval 18–90; the sequence is SDFSSFSYGV…ALIAAAPYIT (73 aa).

In terms of tissue distribution, expressed in larval wing disc, forewing disc, diapausing wing, adult wing, and in very low amounts in fat body and testes.

Functionally, component of the rigid cuticle of the larva and pupa of Hyalophora cecropia. This is Larval/pupal rigid cuticle protein 66 (CP66) from Hyalophora cecropia (Cecropia moth).